The sequence spans 395 residues: Thyroid hormone receptor beta (395 aa).

The interval 1–31 (MSEPAENCSPRWKDEAIQNGYIPSYLDKDEL) is modulating. Residues Cys-32, Cys-35, Cys-49, Cys-52, Cys-70, Cys-76, Cys-86, and Cys-89 each coordinate Zn(2+). NR C4-type zinc fingers lie at residues 32–52 (CVVC…CEGC) and 70–94 (CKYE…FKKC). The nuclear receptor DNA-binding region spans 32-99 (CVVCGDKATG…RFKKCIAVGM (68 aa)). The NR LBD domain maps to 142-395 (EEWDLIRMVT…PPLFLEVFED (254 aa)). 3,3',5-triiodo-L-thyronine contacts are provided by Arg-216, Asn-265, and His-369. 3 residues coordinate L-thyroxine: Arg-216, Asn-265, and His-369.

The protein belongs to the nuclear hormone receptor family. NR1 subfamily.

The protein localises to the nucleus. Nuclear hormone receptor that can act as a repressor or activator of transcription. High affinity receptor for thyroid hormones, including triiodothyronine and thyroxine. The chain is Thyroid hormone receptor beta (thrb) from Paralichthys olivaceus (Bastard halibut).